Reading from the N-terminus, the 416-residue chain is NADH-quinone oxidoreductase subunit H (416 aa).

9 consecutive transmembrane segments (helical) span residues 16 to 36, 84 to 104, 124 to 144, 165 to 185, 197 to 217, 260 to 280, 288 to 308, 320 to 340, and 353 to 373; these read LILA…LAAI, PVYL…FAVI, LAVA…GIVL, VVSY…YAGT, STWY…SMVG, VSAL…PISL, WWPL…YIWL, FMAI…MIVA, and WASG…VVLW.

This sequence belongs to the complex I subunit 1 family. NDH-1 is composed of 14 different subunits. Subunits NuoA, H, J, K, L, M, N constitute the membrane sector of the complex.

It localises to the cell membrane. The catalysed reaction is a quinone + NADH + 5 H(+)(in) = a quinol + NAD(+) + 4 H(+)(out). Its function is as follows. NDH-1 shuttles electrons from NADH, via FMN and iron-sulfur (Fe-S) centers, to quinones in the respiratory chain. The immediate electron acceptor for the enzyme in this species is believed to be menaquinone. Couples the redox reaction to proton translocation (for every two electrons transferred, four hydrogen ions are translocated across the cytoplasmic membrane), and thus conserves the redox energy in a proton gradient. This subunit may bind ubiquinone. This Mycobacterium sp. (strain JLS) protein is NADH-quinone oxidoreductase subunit H.